Reading from the N-terminus, the 191-residue chain is MPKIKMIVGLGNIGKEYQDTRHNVGEWFIAKIAQDNNQSFSSNPKLNCNLAKVSIDYNNVVLVFPTTYMNNSGLAVSKVANFYKIAPAEILVVHDELDIDSGEIRLKKGGGHGGHNGLRSINQHLGTNDYLRLRIGIGHPGHKSKVANYVLSNPSIAQKKDIDSAIDNGICFLDDIINYKLEPVMQKLHTK.

Tyr-17 contacts tRNA. Catalysis depends on His-22, which acts as the Proton acceptor. The tRNA site is built by Tyr-68, Asn-70, and Asn-116.

It belongs to the PTH family. Monomer.

The protein localises to the cytoplasm. It catalyses the reaction an N-acyl-L-alpha-aminoacyl-tRNA + H2O = an N-acyl-L-amino acid + a tRNA + H(+). Its function is as follows. Hydrolyzes ribosome-free peptidyl-tRNAs (with 1 or more amino acids incorporated), which drop off the ribosome during protein synthesis, or as a result of ribosome stalling. Catalyzes the release of premature peptidyl moieties from peptidyl-tRNA molecules trapped in stalled 50S ribosomal subunits, and thus maintains levels of free tRNAs and 50S ribosomes. The sequence is that of Peptidyl-tRNA hydrolase from Francisella tularensis subsp. mediasiatica (strain FSC147).